The sequence spans 1034 residues: Receptor-type guanylate cyclase gcy-25 (1034 aa).

The first 16 residues, 1–16, serve as a signal peptide directing secretion; that stretch reads MLLLLLLLKISTFVDS. The Extracellular segment spans residues 17–409; that stretch reads FQIGHLEFEN…YDNNLCSDFH (393 aa). 5 N-linked (GlcNAc...) asparagine glycosylation sites follow: N28, N224, N301, N308, and N373. The chain crosses the membrane as a helical span at residues 410–430; it reads VFMIAAIVFSILLIPMAIAFY. Residues 431–1034 lie on the Cytoplasmic side of the membrane; that stretch reads LQRKEHLIQQ…DNSKKMFLNV (604 aa). The Protein kinase domain occupies 464 to 749; it reads RVSTISTARA…KITDAVNREF (286 aa). ATP is bound by residues 470–478 and K497; that span reads TARASYSSI. Positions 758–785 form a coiled coil; the sequence is IDQMIEMIDEYSANLEQIVAERTRELEQ. Residues 821 to 951 enclose the Guanylate cyclase domain; that stretch reads TLLVVDVCQF…DTVNMACRMA (131 aa).

The protein belongs to the adenylyl cyclase class-4/guanylyl cyclase family. As to expression, expressed in AQR, PQR and URX sensory neurons.

It is found in the cell membrane. It catalyses the reaction GTP = 3',5'-cyclic GMP + diphosphate. Its function is as follows. Guanylate cyclase involved in the production of the second messenger cGMP. The sequence is that of Receptor-type guanylate cyclase gcy-25 from Caenorhabditis elegans.